Consider the following 1094-residue polypeptide: Probable arabinosyltransferase C (1094 aa).

Transmembrane regions (helical) follow at residues Ile-28–Leu-50, Ala-232–Leu-251, Pro-264–Phe-286, Ser-341–Ser-360, Thr-373–Leu-392, Ile-431–Ile-453, Arg-466–Phe-488, Ser-530–Leu-552, Ser-565–Thr-582, Trp-586–Val-608, Thr-620–Tyr-642, Trp-657–Phe-679, and Leu-700–Ser-722. The segment covering Gly-817–Gly-831 has biased composition (low complexity). The interval Gly-817–Arg-836 is disordered.

Belongs to the emb family.

It localises to the cell membrane. Its function is as follows. Arabinosyl transferase responsible for the polymerization of arabinose into the arabinan of arabinogalactan. The sequence is that of Probable arabinosyltransferase C (embC) from Mycobacterium bovis (strain ATCC BAA-935 / AF2122/97).